A 268-amino-acid polypeptide reads, in one-letter code: UDP-2,3-diacylglucosamine hydrolase (268 aa).

Residues aspartate 25, histidine 27, aspartate 58, asparagine 97, and histidine 132 each coordinate Mn(2+). Residue 97 to 98 (NR) participates in substrate binding. Substrate contacts are provided by aspartate 140, serine 178, glutamate 191, and histidine 222. Mn(2+) contacts are provided by histidine 222 and histidine 224.

It belongs to the LpxH family. Mn(2+) serves as cofactor.

The protein localises to the cell inner membrane. It carries out the reaction UDP-2-N,3-O-bis[(3R)-3-hydroxytetradecanoyl]-alpha-D-glucosamine + H2O = 2-N,3-O-bis[(3R)-3-hydroxytetradecanoyl]-alpha-D-glucosaminyl 1-phosphate + UMP + 2 H(+). It functions in the pathway glycolipid biosynthesis; lipid IV(A) biosynthesis; lipid IV(A) from (3R)-3-hydroxytetradecanoyl-[acyl-carrier-protein] and UDP-N-acetyl-alpha-D-glucosamine: step 4/6. In terms of biological role, hydrolyzes the pyrophosphate bond of UDP-2,3-diacylglucosamine to yield 2,3-diacylglucosamine 1-phosphate (lipid X) and UMP by catalyzing the attack of water at the alpha-P atom. Involved in the biosynthesis of lipid A, a phosphorylated glycolipid that anchors the lipopolysaccharide to the outer membrane of the cell. In Ralstonia nicotianae (strain ATCC BAA-1114 / GMI1000) (Ralstonia solanacearum), this protein is UDP-2,3-diacylglucosamine hydrolase.